We begin with the raw amino-acid sequence, 496 residues long: Probable fatty acyl-CoA reductase 5 (496 aa).

It belongs to the fatty acyl-CoA reductase family. As to expression, expressed in the endodermal cell layer surrounding the central vasculature in roots. Expressed in floral organs of very young unopened buds and receptacle of siliques.

The enzyme catalyses a long-chain fatty acyl-CoA + 2 NADPH + 2 H(+) = a long-chain primary fatty alcohol + 2 NADP(+) + CoA. Functionally, catalyzes the reduction of fatty acyl-CoA to fatty alcohols. Catalyzes specifically the formation of C18:0 fatty alcohol. Provides the fatty alcohols required for synthesis of suberin in roots, seed coat and wound-induced leaf tissue. Provides the fatty alcohols required for synthesis of alkyl hydroxycinnamates in root waxes. The sequence is that of Probable fatty acyl-CoA reductase 5 from Arabidopsis thaliana (Mouse-ear cress).